Here is a 684-residue protein sequence, read N- to C-terminus: Threonine--tRNA ligase (684 aa).

In terms of domain architecture, TGS spans 1 to 66 (MTVPATDSCP…DTDAEVVPVA (66 aa)). The tract at residues 261-567 (DHRKLGSELD…LTEHYAGAFP (307 aa)) is catalytic. Zn(2+)-binding residues include Cys366, His417, and His544.

It belongs to the class-II aminoacyl-tRNA synthetase family. As to quaternary structure, homodimer. Requires Zn(2+) as cofactor.

Its subcellular location is the cytoplasm. It carries out the reaction tRNA(Thr) + L-threonine + ATP = L-threonyl-tRNA(Thr) + AMP + diphosphate + H(+). Its function is as follows. Catalyzes the attachment of threonine to tRNA(Thr) in a two-step reaction: L-threonine is first activated by ATP to form Thr-AMP and then transferred to the acceptor end of tRNA(Thr). Also edits incorrectly charged L-seryl-tRNA(Thr). The chain is Threonine--tRNA ligase from Mycolicibacterium paratuberculosis (strain ATCC BAA-968 / K-10) (Mycobacterium paratuberculosis).